Here is a 90-residue protein sequence, read N- to C-terminus: MDIKLINIGFGNIVSANRIIAIVSPESAPIKRIITEARDRGMLIDATYGRRTRAVIITDSDHVILSAVQPETVANRLVSKEAAQVDEPTD.

The protein belongs to the RemA family.

This is Putative regulatory protein Dred_1699 from Desulforamulus reducens (strain ATCC BAA-1160 / DSM 100696 / MI-1) (Desulfotomaculum reducens).